The sequence spans 158 residues: Small ribosomal subunit protein eS10 (158 aa).

The segment at 99–158 (ETVRRGAVGRPDAPARSAEDRSAYRRAPTTPAAHDKKADVGPGSADLEFRGGFGRGRPAP) is disordered. Gly residues predominate over residues 149-158 (GGFGRGRPAP).

This sequence belongs to the eukaryotic ribosomal protein eS10 family.

The protein localises to the cytoplasm. The chain is Small ribosomal subunit protein eS10 (RpS10) from Spodoptera frugiperda (Fall armyworm).